The sequence spans 532 residues: MAGGGAPAPKADEPQPHPPKDQLPNISYCITSPPPWPEAILLGFQHYLVMLGTTVLIPTALVPQMGGGYEEKAKVIQTILFVAGINTLLQTLFGTRLPAVVGASYTFVPTTISIILSGRFSDTSNPIDRFERIMRATQGALIVASTLQMILGFSGLWRNVVRFLSPISAVPLVGLVGFGLYEFGFPGVAKCIEIGLPELLILVFVSQYLPHVIKSGKNVFDRFAVIFAVVIVWIYAHLLTVGGAYNGAAPTTQTSCRTDRAGIIGAAPWIRVPWPFQWGAPSFDAGEAFAMMMASFVALVESTGAFVAVSRYASATMLPPSILSRGIGWQGVAILISGLFGTGAGSSVSVENAGLLALTRVGSRRVVQIAAGFMIFFSILGKFGAVFASIPAPIIAALYCLFFAYVGAGGLSFLQFCNLNSFRTKFILGFSVFLGLSIPQYFNEYTAIKGYGPVHTGARWFNDMVNVPFSSEPFVAGSVAFFLDNTLHKKDSSIRKDRGKHWWDKFRSFKGDTRSEEFYSLPFNLNKYFPSV.

Residues 1–24 (MAGGGAPAPKADEPQPHPPKDQLP) are disordered. The span at 10-20 (KADEPQPHPPK) shows a compositional bias: basic and acidic residues. Helical transmembrane passes span 39–59 (AILL…LIPT), 75–95 (VIQT…LFGT), 97–117 (LPAV…IILS), 137–157 (TQGA…SGLW), 163–185 (FLSP…EFGF), 192–212 (IEIG…LPHV), 223–243 (FAVI…TVGG), 289–309 (FAMM…FVAV), 361–381 (VGSR…SILG), 392–414 (APII…LSFL), 426–446 (FILG…NEYT), and 463–483 (DMVN…AFFL).

It belongs to the nucleobase:cation symporter-2 (NCS2) (TC 2.A.40) family. In terms of tissue distribution, expressed in the apical region of cotyledons 4 days after imbibition (DAI). Expressed in the whole vasculature at 12 DAI. Expressed in the root central cylinder and lateral root primordia. Expressed in the vasculature of sepals, filaments, carpels and developing siliques.

It is found in the membrane. This chain is Nucleobase-ascorbate transporter 6 (NAT6), found in Arabidopsis thaliana (Mouse-ear cress).